Here is a 113-residue protein sequence, read N- to C-terminus: C-X-C motif chemokine 6 (113 aa).

Positions 1-36 are cleaved as a signal peptide; the sequence is MSLLPSRAARVPGPSSSLCALLALLLLTPPGPLVSA. 2 disulfides stabilise this stretch: Cys48–Cys74 and Cys50–Cys90.

Belongs to the intercrine alpha (chemokine CxC) family.

The protein localises to the secreted. Chemotactic for neutrophil granulocytes. Signals through binding and activation of its receptors (CXCR1 and CXCR2). In addition to its chemotactic and angiogenic properties, it has strong antibacterial activity against Gram-positive and Gram-negative bacteria (90-fold-higher when compared to CXCL5 and CXCL7). This Equus caballus (Horse) protein is C-X-C motif chemokine 6 (CXCL6).